The following is a 715-amino-acid chain: Fatty acid oxidation complex subunit alpha (715 aa).

The interval 1–190 (MIYEGKAITV…KVSAVDAVVT (190 aa)) is enoyl-CoA hydratase/isomerase. D297 lines the substrate pocket. Residues 312 to 715 (KDVKQAAVLG…MAKNGQSFFG (404 aa)) form a 3-hydroxyacyl-CoA dehydrogenase region. NAD(+) contacts are provided by residues M325, D344, 401-403 (VVE), K408, and S430. The active-site For 3-hydroxyacyl-CoA dehydrogenase activity is H451. An NAD(+)-binding site is contributed by N454. 2 residues coordinate substrate: N501 and Y660.

This sequence in the N-terminal section; belongs to the enoyl-CoA hydratase/isomerase family. In the C-terminal section; belongs to the 3-hydroxyacyl-CoA dehydrogenase family. As to quaternary structure, heterotetramer of two alpha chains (FadB) and two beta chains (FadA).

The catalysed reaction is a (3S)-3-hydroxyacyl-CoA + NAD(+) = a 3-oxoacyl-CoA + NADH + H(+). It catalyses the reaction a (3S)-3-hydroxyacyl-CoA = a (2E)-enoyl-CoA + H2O. It carries out the reaction a 4-saturated-(3S)-3-hydroxyacyl-CoA = a (3E)-enoyl-CoA + H2O. The enzyme catalyses (3S)-3-hydroxybutanoyl-CoA = (3R)-3-hydroxybutanoyl-CoA. The catalysed reaction is a (3Z)-enoyl-CoA = a 4-saturated (2E)-enoyl-CoA. It catalyses the reaction a (3E)-enoyl-CoA = a 4-saturated (2E)-enoyl-CoA. It participates in lipid metabolism; fatty acid beta-oxidation. Functionally, involved in the aerobic and anaerobic degradation of long-chain fatty acids via beta-oxidation cycle. Catalyzes the formation of 3-oxoacyl-CoA from enoyl-CoA via L-3-hydroxyacyl-CoA. It can also use D-3-hydroxyacyl-CoA and cis-3-enoyl-CoA as substrate. The sequence is that of Fatty acid oxidation complex subunit alpha from Pseudomonas fragi.